A 1108-amino-acid chain; its full sequence is Mediator of RNA polymerase II transcription subunit 14 (1108 aa).

Disordered stretches follow at residues M1–T30, S35–L54, and Q1048–T1108. Residues S35–N52 show a composition bias toward polar residues. Residues Q1048–L1080 show a composition bias toward low complexity.

Belongs to the Mediator complex subunit 14 family. As to quaternary structure, component of the Mediator complex.

It is found in the nucleus. Its function is as follows. Component of the Mediator complex, a coactivator involved in the regulated transcription of nearly all RNA polymerase II-dependent genes. Mediator functions as a bridge to convey information from gene-specific regulatory proteins to the basal RNA polymerase II transcription machinery. Mediator is recruited to promoters by direct interactions with regulatory proteins and serves as a scaffold for the assembly of a functional preinitiation complex with RNA polymerase II and the general transcription factors. The sequence is that of Mediator of RNA polymerase II transcription subunit 14 (RGR1) from Pyricularia oryzae (strain 70-15 / ATCC MYA-4617 / FGSC 8958) (Rice blast fungus).